The chain runs to 199 residues: Thymidylate kinase (199 aa).

Residue 7–14 (GIDGSGKS) participates in ATP binding.

It belongs to the thymidylate kinase family.

The catalysed reaction is dTMP + ATP = dTDP + ADP. Functionally, phosphorylation of dTMP to form dTDP in both de novo and salvage pathways of dTTP synthesis. This Neorickettsia sennetsu (strain ATCC VR-367 / Miyayama) (Ehrlichia sennetsu) protein is Thymidylate kinase.